The chain runs to 332 residues: uncharacterized protein (332 aa).

A helical membrane pass occupies residues 27 to 47 (CAIVFLCVLLILPFLSCCTSL).

The protein localises to the membrane. This is an uncharacterized protein from Treponema pallidum (strain Nichols).